We begin with the raw amino-acid sequence, 35 residues long: MSDIN-like toxin proprotein 6 (35 aa).

Positions 1-10 (MSDINGTRLP) are excised as a propeptide. The cyclopeptide (Ile-Pro) cross-link spans 11 to 20 (IPGLIPLGIP). A propeptide spanning residues 21-35 (CVSDDVNPTLTRGER) is cleaved from the precursor.

Belongs to the MSDIN fungal toxin family. Post-translationally, processed by the macrocyclase-peptidase enzyme POPB to yield a toxic cyclic decapeptide. POPB first removes 10 residues from the N-terminus. Conformational trapping of the remaining peptide forces the enzyme to release this intermediate rather than proceed to macrocyclization. The enzyme rebinds the remaining peptide in a different conformation and catalyzes macrocyclization of the N-terminal 10 residues.

Its function is as follows. Probable toxin that belongs to the MSDIN-like toxin family responsible for a large number of food poisoning cases and deaths. This chain is MSDIN-like toxin proprotein 6, found in Amanita bisporigera (Destroying angel).